Consider the following 102-residue polypeptide: Glutaredoxin-C13 (102 aa).

The Glutaredoxin domain occupies 1-101; the sequence is MDKVMRMSSE…PLIKPYQSIL (101 aa). Cys-21 and Cys-24 form a disulfide bridge.

It belongs to the glutaredoxin family. CC-type subfamily.

It is found in the cytoplasm. Has a glutathione-disulfide oxidoreductase activity in the presence of NADPH and glutathione reductase. Reduces low molecular weight disulfides and proteins. This is Glutaredoxin-C13 (GRXC13) from Arabidopsis thaliana (Mouse-ear cress).